Here is a 334-residue protein sequence, read N- to C-terminus: Holliday junction branch migration complex subunit RuvB (334 aa).

The segment at 4–184 (ADRLIQPQLQ…FGIPLRLEFY (181 aa)) is large ATPase domain (RuvB-L). Residues Arg24, Gly65, Lys68, Thr69, Thr70, 131–133 (EDY), Arg174, Tyr184, and Arg221 each bind ATP. A Mg(2+)-binding site is contributed by Thr69. Residues 185–255 (NVKDLSTIVT…VAEQALDLLD (71 aa)) are small ATPAse domain (RuvB-S). Residues 258 to 334 (GEGFDYMDRK…YLHFGMIKPE (77 aa)) form a head domain (RuvB-H) region. Positions 294, 313, and 318 each coordinate DNA.

Belongs to the RuvB family. Homohexamer. Forms an RuvA(8)-RuvB(12)-Holliday junction (HJ) complex. HJ DNA is sandwiched between 2 RuvA tetramers; dsDNA enters through RuvA and exits via RuvB. An RuvB hexamer assembles on each DNA strand where it exits the tetramer. Each RuvB hexamer is contacted by two RuvA subunits (via domain III) on 2 adjacent RuvB subunits; this complex drives branch migration. In the full resolvosome a probable DNA-RuvA(4)-RuvB(12)-RuvC(2) complex forms which resolves the HJ.

It localises to the cytoplasm. It carries out the reaction ATP + H2O = ADP + phosphate + H(+). Its function is as follows. The RuvA-RuvB-RuvC complex processes Holliday junction (HJ) DNA during genetic recombination and DNA repair, while the RuvA-RuvB complex plays an important role in the rescue of blocked DNA replication forks via replication fork reversal (RFR). RuvA specifically binds to HJ cruciform DNA, conferring on it an open structure. The RuvB hexamer acts as an ATP-dependent pump, pulling dsDNA into and through the RuvAB complex. RuvB forms 2 homohexamers on either side of HJ DNA bound by 1 or 2 RuvA tetramers; 4 subunits per hexamer contact DNA at a time. Coordinated motions by a converter formed by DNA-disengaged RuvB subunits stimulates ATP hydrolysis and nucleotide exchange. Immobilization of the converter enables RuvB to convert the ATP-contained energy into a lever motion, pulling 2 nucleotides of DNA out of the RuvA tetramer per ATP hydrolyzed, thus driving DNA branch migration. The RuvB motors rotate together with the DNA substrate, which together with the progressing nucleotide cycle form the mechanistic basis for DNA recombination by continuous HJ branch migration. Branch migration allows RuvC to scan DNA until it finds its consensus sequence, where it cleaves and resolves cruciform DNA. This Shewanella sp. (strain ANA-3) protein is Holliday junction branch migration complex subunit RuvB.